A 373-amino-acid chain; its full sequence is Glutamine synthetase (373 aa).

An N-acetylthreonine modification is found at Thr-2. Residues 2-25 are required for glutamine-induced ubiquitination by CRL4(CRBN) and proteasomal degradation; that stretch reads TTSASSHLNKGIKQVYMSLPQGEK. Lys-11 and Lys-14 each carry N6-acetyllysine; by EP300. The GS beta-grasp domain occupies 24-106; it reads EKVQAMYIWI…VLCEVFKYNR (83 aa). Tyr-104 is modified (phosphotyrosine). Residues 113 to 373 enclose the GS catalytic domain; sequence LRHTCKRIMD…TGDEPFQYKN (261 aa). Residue Glu-134 participates in ATP binding. Glu-134, Glu-136, Glu-196, and Glu-203 together coordinate Mn(2+). Residue 203–208 participates in ATP binding; it reads EFQIGP. An L-glutamate-binding site is contributed by 246–247; sequence NW. His-253 is a Mn(2+) binding site. ATP contacts are provided by residues 255-257, Arg-319, and Arg-324; that span reads NFS. Arg-319 serves as a coordination point for L-glutamate. Residue 336–338 coordinates ADP; sequence YFE. Residue Glu-338 participates in Mn(2+) binding. An L-glutamate-binding site is contributed by Arg-340. Residue Ser-343 is modified to Phosphoserine.

It belongs to the glutamine synthetase family. Decamer; composed of two pentamers. Interacts with PALMD. Interacts with RHOJ. Interacts with BEST2; this interaction tethers a fraction of GLUL to the membrane, causing a decrease of cytosolic glutamine synthase (GS) activity and inhibits the chloride channel activity of BEST2 by affecting the gating at the aperture in the absence of intracellular glutamate. The cofactor is Mg(2+). Requires Mn(2+) as cofactor. In terms of processing, acetylated by EP300/p300; acetylation is stimulated by increased glutamine levels and promotes ubiquitin-mediated proteasomal degradation. Palmitoylated; undergoes autopalmitoylation. Post-translationally, ubiquitinated by ZNRF1. Ubiquitinated by the DCX (DDB1-CUL4-X-box) E3 ubiquitin-protein ligase complex called CRL4(CRBN), leading to proteasomal degradation. As to expression, expressed in endothelial cells.

It is found in the cytoplasm. It localises to the cytosol. Its subcellular location is the microsome. The protein localises to the mitochondrion. The protein resides in the cell membrane. The enzyme catalyses L-glutamate + NH4(+) + ATP = L-glutamine + ADP + phosphate + H(+). It catalyses the reaction L-cysteinyl-[protein] + hexadecanoyl-CoA = S-hexadecanoyl-L-cysteinyl-[protein] + CoA. Glutamine synthetase activity is inhibited by methionine sulfoximine (MSO). Its function is as follows. Glutamine synthetase that catalyzes the ATP-dependent conversion of glutamate and ammonia to glutamine. Its role depends on tissue localization: in the brain, it regulates the levels of toxic ammonia and converts neurotoxic glutamate to harmless glutamine, whereas in the liver, it is one of the enzymes responsible for the removal of ammonia. Plays a key role in ammonium detoxification during erythropoiesis: the glutamine synthetase activity is required to remove ammonium generated by porphobilinogen deaminase (HMBS) during heme biosynthesis to prevent ammonium accumulation and oxidative stress. Essential for proliferation of fetal skin fibroblasts. Independently of its glutamine synthetase activity, required for endothelial cell migration during vascular development: acts by regulating membrane localization and activation of the GTPase RHOJ, possibly by promoting RHOJ palmitoylation. May act as a palmitoyltransferase for RHOJ: able to autopalmitoylate and then transfer the palmitoyl group to RHOJ. Plays a role in ribosomal 40S subunit biogenesis. Through the interaction with BEST2, inhibits BEST2 channel activity by affecting the gating at the aperture in the absence of intracellular L-glutamate, but sensitizes BEST2 to intracellular L-glutamate, which promotes the opening of BEST2 and thus relieves its inhibitory effect on BEST2. The sequence is that of Glutamine synthetase from Homo sapiens (Human).